Here is a 573-residue protein sequence, read N- to C-terminus: Urease subunit alpha 2 (573 aa).

A Urease domain is found at 135 to 573 (GGMDTHVHYI…ISLNQLYFFS (439 aa)). His140, His142, and Lys223 together coordinate Ni(2+). The residue at position 223 (Lys223) is an N6-carboxylysine. His225 serves as a coordination point for substrate. The Ni(2+) site is built by His252 and His278. His326 functions as the Proton donor in the catalytic mechanism. Residue Asp366 participates in Ni(2+) binding.

This sequence belongs to the metallo-dependent hydrolases superfamily. Urease alpha subunit family. In terms of assembly, heterotrimer of UreA (gamma), UreB (beta) and UreC (alpha) subunits. Three heterotrimers associate to form the active enzyme. Requires Ni cation as cofactor. In terms of processing, carboxylation allows a single lysine to coordinate two nickel ions.

It localises to the cytoplasm. The catalysed reaction is urea + 2 H2O + H(+) = hydrogencarbonate + 2 NH4(+). The protein operates within nitrogen metabolism; urea degradation; CO(2) and NH(3) from urea (urease route): step 1/1. Disrupting the ure2 operon has no effect on urease activity or pathogen survival in BALB/c mice when administered orally. The polypeptide is Urease subunit alpha 2 (Brucella abortus (strain 2308)).